Here is a 491-residue protein sequence, read N- to C-terminus: Limb region 1 homolog-like protein (491 aa).

Residues 1 to 20 (METEDVTVREQIFHDRVRET) lie on the Extracellular side of the membrane. A helical transmembrane segment spans residues 21-41 (IICVLLFICLYILSHFILTHF). The Cytoplasmic segment spans residues 42 to 59 (KKSAEFVTDDIEDATVNK). The chain crosses the membrane as a helical span at residues 60–80 (IALWLCTFTLSVAVCAVLLLP). Residues 81–111 (ISILSNEVLLTFPHSYYMQWLNGSLIRGLWN) are Extracellular-facing. A helical transmembrane segment spans residues 112–132 (LVFLFSNLSLVFLMPFAYFFT). Over 133 to 152 (ESEGFAGSKKGVMARVYETA) the chain is Cytoplasmic. The chain crosses the membrane as a helical span at residues 153–173 (VMLLLLSLLVLGIVWVASALL). Residues 174 to 192 (HHNTARESLYDLWEYYLPY) are Extracellular-facing. A helical membrane pass occupies residues 193-213 (LYSGISLFGVLLLLLCTPFGL). Residues 214 to 292 (SRMFSVTGSL…RKRASPWQRN (79 aa)) lie on the Cytoplasmic side of the membrane. Residues 293–313 (LVYPVAMLLLLALTAVSVLMV) form a helical membrane-spanning segment. Over 314–346 (CFHVLELLFDESAMPRGMEDPHLGLASFSMLGS) the chain is Extracellular. A helical transmembrane segment spans residues 347–367 (LGAAVQVVIILYLMVSSVVGF). At 368–384 (YSSPLFTGLLPRAQDTT) the chain is on the cytoplasmic side. Residues 385 to 405 (LTQIIGNCVSLLILSSALPVF) traverse the membrane as a helical segment. Over 406–427 (SRTLGITKFDLLGDFGRHDWLG) the chain is Extracellular. The chain crosses the membrane as a helical span at residues 428–448 (SFHIVFLYNMLFAGLTSACLI). Over 449 to 491 (NTVTWALQRELIRAFGLHRLPLTVSRSTIPLKLLLANGLSKIH) the chain is Cytoplasmic.

Belongs to the LIMR family. As to quaternary structure, dimer. Can also form higher oligomers.

Its subcellular location is the cell membrane. It is found in the endoplasmic reticulum membrane. Functionally, may play a role in lymphocyte development by negatively regulating the canonical Wnt signaling pathway. May act as a LCN1 receptor. The protein is Limb region 1 homolog-like protein (lmbr1l) of Danio rerio (Zebrafish).